Here is a 329-residue protein sequence, read N- to C-terminus: GMP reductase (329 aa).

Residue C178 is the Thioimidate intermediate of the active site. 207–230 provides a ligand contact to NADP(+); that stretch reads VIADGGIRTHGDVAKSIRMGATMV.

This sequence belongs to the IMPDH/GMPR family. GuaC type 2 subfamily.

The catalysed reaction is IMP + NH4(+) + NADP(+) = GMP + NADPH + 2 H(+). Functionally, catalyzes the irreversible NADPH-dependent deamination of GMP to IMP. It functions in the conversion of nucleobase, nucleoside and nucleotide derivatives of G to A nucleotides, and in maintaining the intracellular balance of A and G nucleotides. The polypeptide is GMP reductase (Lactococcus lactis subsp. cremoris (strain MG1363)).